A 490-amino-acid chain; its full sequence is Betaine aldehyde dehydrogenase (490 aa).

Aspartate 93 is a binding site for K(+). Residue glycine 150–tryptophan 152 coordinates NAD(+). Lysine 162 acts as the Charge relay system in catalysis. Residue lysine 176–glutamate 179 coordinates NAD(+). A K(+)-binding site is contributed by valine 180. Glycine 230–serine 233 is a binding site for NAD(+). Leucine 246 is a K(+) binding site. Glutamate 252 serves as the catalytic Proton acceptor. Residues glycine 254, cysteine 286, and glutamate 387 each coordinate NAD(+). Catalysis depends on cysteine 286, which acts as the Nucleophile. At cysteine 286 the chain carries Cysteine sulfenic acid (-SOH). 2 residues coordinate K(+): lysine 457 and glycine 460. Glutamate 464 acts as the Charge relay system in catalysis.

Belongs to the aldehyde dehydrogenase family. Dimer of dimers. It depends on K(+) as a cofactor.

The catalysed reaction is betaine aldehyde + NAD(+) + H2O = glycine betaine + NADH + 2 H(+). It functions in the pathway amine and polyamine biosynthesis; betaine biosynthesis via choline pathway; betaine from betaine aldehyde: step 1/1. Functionally, involved in the biosynthesis of the osmoprotectant glycine betaine. Catalyzes the irreversible oxidation of betaine aldehyde to the corresponding acid. This Yersinia pseudotuberculosis serotype O:3 (strain YPIII) protein is Betaine aldehyde dehydrogenase.